Consider the following 77-residue polypeptide: Acyl carrier protein (77 aa).

In terms of domain architecture, Carrier spans 2-77; it reads SAIDKRVKEI…DAIDYITEHT (76 aa). At S37 the chain carries O-(pantetheine 4'-phosphoryl)serine.

Belongs to the acyl carrier protein (ACP) family. Post-translationally, 4'-phosphopantetheine is transferred from CoA to a specific serine of apo-ACP by AcpS. This modification is essential for activity because fatty acids are bound in thioester linkage to the sulfhydryl of the prosthetic group.

It localises to the cytoplasm. It functions in the pathway lipid metabolism; fatty acid biosynthesis. Functionally, carrier of the growing fatty acid chain in fatty acid biosynthesis. This is Acyl carrier protein from Geobacter metallireducens (strain ATCC 53774 / DSM 7210 / GS-15).